We begin with the raw amino-acid sequence, 396 residues long: NADH-quinone oxidoreductase subunit D 1 (396 aa).

It belongs to the complex I 49 kDa subunit family. In terms of assembly, NDH-1 is composed of 14 different subunits. Subunits NuoB, C, D, E, F, and G constitute the peripheral sector of the complex.

The protein localises to the cell inner membrane. The catalysed reaction is a quinone + NADH + 5 H(+)(in) = a quinol + NAD(+) + 4 H(+)(out). Functionally, NDH-1 shuttles electrons from NADH, via FMN and iron-sulfur (Fe-S) centers, to quinones in the respiratory chain. The immediate electron acceptor for the enzyme in this species is believed to be ubiquinone. Couples the redox reaction to proton translocation (for every two electrons transferred, four hydrogen ions are translocated across the cytoplasmic membrane), and thus conserves the redox energy in a proton gradient. This Beijerinckia indica subsp. indica (strain ATCC 9039 / DSM 1715 / NCIMB 8712) protein is NADH-quinone oxidoreductase subunit D 1.